Reading from the N-terminus, the 265-residue chain is 4-hydroxy-tetrahydrodipicolinate reductase (265 aa).

Residues 7–12 and aspartate 33 each bind NAD(+); that span reads GASGRM. Residue arginine 34 participates in NADP(+) binding. NAD(+) contacts are provided by residues 96 to 98 and 120 to 123; these read GTT and ASNF. Residue histidine 153 is the Proton donor/acceptor of the active site. Histidine 154 is a (S)-2,3,4,5-tetrahydrodipicolinate binding site. The active-site Proton donor is lysine 157. 163–164 serves as a coordination point for (S)-2,3,4,5-tetrahydrodipicolinate; sequence GT.

Belongs to the DapB family.

It is found in the cytoplasm. The enzyme catalyses (S)-2,3,4,5-tetrahydrodipicolinate + NAD(+) + H2O = (2S,4S)-4-hydroxy-2,3,4,5-tetrahydrodipicolinate + NADH + H(+). It catalyses the reaction (S)-2,3,4,5-tetrahydrodipicolinate + NADP(+) + H2O = (2S,4S)-4-hydroxy-2,3,4,5-tetrahydrodipicolinate + NADPH + H(+). It participates in amino-acid biosynthesis; L-lysine biosynthesis via DAP pathway; (S)-tetrahydrodipicolinate from L-aspartate: step 4/4. Catalyzes the conversion of 4-hydroxy-tetrahydrodipicolinate (HTPA) to tetrahydrodipicolinate. The sequence is that of 4-hydroxy-tetrahydrodipicolinate reductase from Paraburkholderia phymatum (strain DSM 17167 / CIP 108236 / LMG 21445 / STM815) (Burkholderia phymatum).